Reading from the N-terminus, the 277-residue chain is Large ribosomal subunit protein uL2c (277 aa).

The disordered stretch occupies residues 228–254; it reads VDHPHGGGEGRCPVGHAQPRTPWGKPA.

This sequence belongs to the universal ribosomal protein uL2 family. Part of the 50S ribosomal subunit.

It is found in the plastid. The protein resides in the chloroplast. This Ostreococcus tauri protein is Large ribosomal subunit protein uL2c (rpl2).